The sequence spans 204 residues: Protein GrpE (204 aa).

The segment at 1–52 (MSSKNNPESETKAKNKWEKVMEAEEEQEEGGGDGSQEMEPHREGLEFPSREK) is disordered. Basic and acidic residues-rich tracts occupy residues 7–22 (PESE…KVME) and 38–52 (MEPH…SREK).

It belongs to the GrpE family. As to quaternary structure, homodimer.

The protein resides in the cytoplasm. Functionally, participates actively in the response to hyperosmotic and heat shock by preventing the aggregation of stress-denatured proteins, in association with DnaK and GrpE. It is the nucleotide exchange factor for DnaK and may function as a thermosensor. Unfolded proteins bind initially to DnaJ; upon interaction with the DnaJ-bound protein, DnaK hydrolyzes its bound ATP, resulting in the formation of a stable complex. GrpE releases ADP from DnaK; ATP binding to DnaK triggers the release of the substrate protein, thus completing the reaction cycle. Several rounds of ATP-dependent interactions between DnaJ, DnaK and GrpE are required for fully efficient folding. The protein is Protein GrpE of Coxiella burnetii (strain Dugway 5J108-111).